A 359-amino-acid chain; its full sequence is DNA replication and repair protein RecF (359 aa).

30 to 37 (GPNGSGKT) contributes to the ATP binding site.

Belongs to the RecF family.

The protein localises to the cytoplasm. In terms of biological role, the RecF protein is involved in DNA metabolism; it is required for DNA replication and normal SOS inducibility. RecF binds preferentially to single-stranded, linear DNA. It also seems to bind ATP. In Vibrio vulnificus (strain CMCP6), this protein is DNA replication and repair protein RecF.